A 129-amino-acid polypeptide reads, in one-letter code: Glycine cleavage system H protein (129 aa).

One can recognise a Lipoyl-binding domain in the interval 24–106 (LLKIGVSEFA…IGDGWLVILK (83 aa)). Residue K65 is modified to N6-lipoyllysine.

Belongs to the GcvH family. The glycine cleavage system is composed of four proteins: P, T, L and H. (R)-lipoate serves as cofactor.

The glycine cleavage system catalyzes the degradation of glycine. The H protein shuttles the methylamine group of glycine from the P protein to the T protein. The protein is Glycine cleavage system H protein of Prochlorococcus marinus (strain MIT 9301).